We begin with the raw amino-acid sequence, 178 residues long: Caveolin-1 (178 aa).

Ser2 is modified (N-acetylserine). Residue Ser2 is modified to Phosphoserine. The required for homooligomerization stretch occupies residues Ser2–Val94. The Cytoplasmic portion of the chain corresponds to Ser2–Ser104. Residue Lys5 is modified to N6-acetyllysine; alternate. A Glycyl lysine isopeptide (Lys-Gly) (interchain with G-Cter in ubiquitin); alternate cross-link involves residue Lys5. Tyr6 is modified (phosphotyrosine). Ser9 carries the phosphoserine modification. The residue at position 14 (Tyr14) is a Phosphotyrosine; by ABL1. At Tyr25 the chain carries Phosphotyrosine. Glycyl lysine isopeptide (Lys-Gly) (interchain with G-Cter in ubiquitin) cross-links involve residues Lys26 and Lys30. Ser37 carries the phosphoserine modification. Residues Lys39, Lys47, and Lys57 each participate in a glycyl lysine isopeptide (Lys-Gly) (interchain with G-Cter in ubiquitin) cross-link. The interval Asp82–Val94 is interaction with CAVIN3. The helical intramembrane region spans Ala105 to Leu125. Over His126–Ile178 the chain is Cytoplasmic. The tract at residues Val131–Gln142 is interacts with SPRY1, SPRY2, SPRY3 and SPRY4. S-palmitoyl cysteine attachment occurs at residues Cys133, Cys143, and Cys156. An interacts with SPRY1, SPRY2, and SPRY4 region spans residues Ser149–Phe160. The interval Phe167–Ile178 is interacts with SPRY1, SPRY2, SPRY3 and SPRY4.

The protein belongs to the caveolin family. In terms of assembly, homooligomer. Interacts with GLIPR2. Interacts with NOSTRIN. Interacts with SNAP25 and STX1A. Interacts (via the N-terminus) with DPP4; the interaction is direct. Interacts with CTNNB1, CDH1 and JUP. Interacts with PACSIN2; this interaction induces membrane tubulation. Interacts with SLC7A9. Interacts with BMX and BTK. Interacts with TGFBR1. Interacts with CAVIN3 (via leucine-zipper domain) in a cholesterol-sensitive manner. Interacts with CAVIN1. Interacts with EHD2 in a cholesterol-dependent manner. Forms a ternary complex with UBXN6 and VCP; mediates CAV1 targeting to lysosomes for degradation. Interacts with ABCG1; this interaction regulates ABCG1-mediated cholesterol efflux. Interacts with NEU3; this interaction enhances NEU3 sialidase activity within caveola. Interacts (via C-terminus) with SPRY1, SPRY2 (via C-terminus), SPRY3, and SPRY4. Interacts with IGFBP5; this interaction allows trafficking of IGFBP5 from the plasma membrane to the nucleus. Post-translationally, phosphorylated at Tyr-14 by ABL1 in response to oxidative stress. In terms of processing, ubiquitinated. Undergo monoubiquitination and multi- and/or polyubiquitination. Monoubiquitination of N-terminal lysines promotes integration in a ternary complex with UBXN6 and VCP which promotes oligomeric CAV1 targeting to lysosomes for degradation. Ubiquitinated by ZNRF1; leading to degradation and modulation of the TLR4-mediated immune response.

The protein localises to the golgi apparatus membrane. It localises to the cell membrane. The protein resides in the membrane. Its subcellular location is the caveola. It is found in the membrane raft. Functionally, may act as a scaffolding protein within caveolar membranes. Forms a stable heterooligomeric complex with CAV2 that targets to lipid rafts and drives caveolae formation. Mediates the recruitment of CAVIN proteins (CAVIN1/2/3/4) to the caveolae. Interacts directly with G-protein alpha subunits and can functionally regulate their activity. Involved in the costimulatory signal essential for T-cell receptor (TCR)-mediated T-cell activation. Its binding to DPP4 induces T-cell proliferation and NF-kappa-B activation in a T-cell receptor/CD3-dependent manner. Recruits CTNNB1 to caveolar membranes and may regulate CTNNB1-mediated signaling through the Wnt pathway. Negatively regulates TGFB1-mediated activation of SMAD2/3 by mediating the internalization of TGFBR1 from membrane rafts leading to its subsequent degradation. Binds 20(S)-hydroxycholesterol (20(S)-OHC). The sequence is that of Caveolin-1 (CAV1) from Pongo abelii (Sumatran orangutan).